The chain runs to 116 residues: Iron-sulfur cluster insertion protein ErpA (116 aa).

Cysteine 44, cysteine 108, and cysteine 110 together coordinate iron-sulfur cluster.

Belongs to the HesB/IscA family. In terms of assembly, homodimer. It depends on iron-sulfur cluster as a cofactor.

Functionally, required for insertion of 4Fe-4S clusters for at least IspG. This chain is Iron-sulfur cluster insertion protein ErpA, found in Shewanella baltica (strain OS223).